Consider the following 489-residue polypeptide: Anthranilate synthase component 1 1 (489 aa).

262 to 264 (PYS) lines the L-tryptophan pocket. The disordered stretch occupies residues 288-309 (DRIETEPIAGTRPRGETPDADD). Position 297 to 298 (297 to 298 (GT)) interacts with chorismate. Residues 300–309 (PRGETPDADD) are compositionally biased toward basic and acidic residues. Mg(2+) is bound at residue Glu-324. Chorismate-binding positions include Tyr-412, Arg-432, 446–448 (GAG), and Gly-448. Glu-461 serves as a coordination point for Mg(2+).

Belongs to the anthranilate synthase component I family. In terms of assembly, tetramer of two components I and two components II. The cofactor is Mg(2+).

It carries out the reaction chorismate + L-glutamine = anthranilate + pyruvate + L-glutamate + H(+). The protein operates within amino-acid biosynthesis; L-tryptophan biosynthesis; L-tryptophan from chorismate: step 1/5. This Haloarcula marismortui (strain ATCC 43049 / DSM 3752 / JCM 8966 / VKM B-1809) (Halobacterium marismortui) protein is Anthranilate synthase component 1 1 (trpE1).